The following is a 70-amino-acid chain: Melittin-N (70 aa).

The N-terminal stretch at 1 to 21 (MKFLVNVALVFMVVYISYIYA) is a signal peptide. Positions 22-43 (APEPEPAPEPEAEADAEADPEA) are cleaved as a propeptide — removed by a dipeptidylpeptidase. At Gly44 the chain carries N-formylglycine; partial. Gln69 is subject to Glutamine amide.

It belongs to the melittin family. As to quaternary structure, monomer (in solution and for integration into membranes), homotetramer (in solution and potentially as a toroidal pore in membranes), and potenially homomultimer (as a toroidal pore in membranes). As to expression, expressed by the venom gland.

The protein resides in the secreted. It is found in the target cell membrane. In terms of biological role, main toxin of bee venom with strong hemolytic activity and antimicrobial activity. It has enhancing effects on bee venom phospholipase A2 activity. This amphipathic toxin binds to negatively charged membrane surface and forms pore by inserting into lipid bilayers inducing the leakage of ions and molecules and the enhancement of permeability that ultimately leads to cell lysis. It acts as a voltage-gated pore with higher selectivity for anions over cations. The ion conductance has been shown to be voltage-dependent. Self-association of melittin in membranes is promoted by high ionic strength, but not by the presence of negatively charged lipids. In vivo, intradermal injection into healthy human volunteers produce sharp pain sensation and an inflammatory response. It produces pain by activating primary nociceptor cells directly and indirectly due to its ability to activate plasma membrane phospholipase A2 and its pore-forming activity. Shows lower cytotoxicity when tested on E.coli and cancer cell lines than melittin, as well as lower anti-inflammatory properties and lower properties to interact to small unilamellar liposomes. The polypeptide is Melittin-N (MELT) (Apis cerana (Indian honeybee)).